Here is a 558-residue protein sequence, read N- to C-terminus: Potassium-transporting ATPase potassium-binding subunit (558 aa).

The next 12 helical transmembrane spans lie at 1–21 (MEII…SGYL), 66–86 (FNGF…WLFL), 127–147 (MIVM…VCIA), 166–186 (IVRF…ILLM), 245–265 (IWSN…MLFL), 281–301 (ALIL…LTMW), 327–347 (FGAG…TGSV), 354–374 (LTPI…VFGG), 377–397 (VGLM…SLMV), 416–436 (IVLV…LAFM), 482–502 (ISTG…QLMI), and 531–551 (IVFI…LGPI).

This sequence belongs to the KdpA family. As to quaternary structure, the system is composed of three essential subunits: KdpA, KdpB and KdpC.

The protein resides in the cell membrane. Part of the high-affinity ATP-driven potassium transport (or Kdp) system, which catalyzes the hydrolysis of ATP coupled with the electrogenic transport of potassium into the cytoplasm. This subunit binds the extracellular potassium ions and delivers the ions to the membrane domain of KdpB through an intramembrane tunnel. This is Potassium-transporting ATPase potassium-binding subunit from Staphylococcus aureus (strain USA300).